A 115-amino-acid polypeptide reads, in one-letter code: MASTKDEVVRMSVDEYWEDIKDDYLIQLANTDPNEVYPSNNPGPTTADGQINFECHCVGHLVGSPCGFEFREAITCQKTNSDGEIEQGACGKELMSFMECVTRTQCFGTGDNDKK.

Residues 63–108 enclose the CHCH domain; sequence GSPCGFEFREAITCQKTNSDGEIEQGACGKELMSFMECVTRTQCFG. 2 short sequence motifs (cx9C motif) span residues 66–76 and 90–100; these read CGFEFREAITC and CGKELMSFMEC. Disulfide bonds link Cys-66-Cys-100 and Cys-76-Cys-90.

This is an uncharacterized protein from Caenorhabditis elegans.